Here is a 309-residue protein sequence, read N- to C-terminus: MTSKLDQLKKFTTVVADTGDFGAIKSLKPQDATTNPSLLLKAASSESNDQMLADAFSGAKGDIGLACDRFAVAIGQEILKVVPGRVSTEVDARLSFDTDALIERSERIIGLYDTAGISRDRVLIKLAATWEGIRAAEKLEKDGIQTNLTLLFSFAQAVACAEAGVFLISPFVGRIYDWYKKSSGTDYVGADDPGVQSVTRIYNYYKANDFKTVVMGASFRNLNQIEQLAGCDRLTISTELLKQLAEDTGTLEQKLAPGNAGEARQSLTESQFRWASNEDAMATEKLAEGIRQFARDQEKLEALLSAKKS.

Lys125 functions as the Schiff-base intermediate with substrate in the catalytic mechanism.

The protein belongs to the transaldolase family. Type 1 subfamily. As to quaternary structure, homodimer.

The protein localises to the cytoplasm. It catalyses the reaction D-sedoheptulose 7-phosphate + D-glyceraldehyde 3-phosphate = D-erythrose 4-phosphate + beta-D-fructose 6-phosphate. It participates in carbohydrate degradation; pentose phosphate pathway; D-glyceraldehyde 3-phosphate and beta-D-fructose 6-phosphate from D-ribose 5-phosphate and D-xylulose 5-phosphate (non-oxidative stage): step 2/3. Its function is as follows. Transaldolase is important for the balance of metabolites in the pentose-phosphate pathway. This chain is Transaldolase, found in Pseudomonas syringae pv. tomato (strain ATCC BAA-871 / DC3000).